Reading from the N-terminus, the 281-residue chain is Probable endonuclease 4 (281 aa).

9 residues coordinate Zn(2+): His67, His107, Glu142, Asp176, His179, His211, Asp224, His226, and Glu256.

The protein belongs to the AP endonuclease 2 family. Zn(2+) is required as a cofactor.

The catalysed reaction is Endonucleolytic cleavage to 5'-phosphooligonucleotide end-products.. Endonuclease IV plays a role in DNA repair. It cleaves phosphodiester bonds at apurinic or apyrimidinic (AP) sites, generating a 3'-hydroxyl group and a 5'-terminal sugar phosphate. This chain is Probable endonuclease 4, found in Alkaliphilus oremlandii (strain OhILAs) (Clostridium oremlandii (strain OhILAs)).